The chain runs to 334 residues: L-lactate dehydrogenase B chain (334 aa).

Position 2 is an N-acetylalanine (Ala2). N6-acetyllysine is present on Lys7. NAD(+) contacts are provided by residues Gly30–Lys58 and Arg100. At Ser44 the chain carries Phosphoserine. The residue at position 58 (Lys58) is an N6-acetyllysine. Residue Arg107 participates in substrate binding. At Lys119 the chain carries N6-acetyllysine. Asn139 is a binding site for NAD(+). Residues Asn139 and Arg170 each contribute to the substrate site. The Proton acceptor role is filled by His194. Tyr240 carries the post-translational modification Phosphotyrosine. Thr249 provides a ligand contact to substrate. Lys329 bears the N6-acetyllysine mark.

This sequence belongs to the LDH/MDH superfamily. LDH family. As to quaternary structure, homotetramer. Interacts with PTEN upstream reading frame protein MP31; the interaction leads to inhibition of mitochondrial lactate dehydrogenase activity, preventing conversion of lactate to pyruvate in mitochondria.

The protein localises to the cytoplasm. It localises to the mitochondrion inner membrane. It carries out the reaction (S)-lactate + NAD(+) = pyruvate + NADH + H(+). Its pathway is fermentation; pyruvate fermentation to lactate; (S)-lactate from pyruvate: step 1/1. In terms of biological role, interconverts simultaneously and stereospecifically pyruvate and lactate with concomitant interconversion of NADH and NAD(+). This Sus scrofa (Pig) protein is L-lactate dehydrogenase B chain (LDHB).